Here is a 622-residue protein sequence, read N- to C-terminus: Chaperone protein HscA homolog (622 aa).

The protein belongs to the heat shock protein 70 family.

In terms of biological role, chaperone involved in the maturation of iron-sulfur cluster-containing proteins. Has a low intrinsic ATPase activity which is markedly stimulated by HscB. In Burkholderia lata (strain ATCC 17760 / DSM 23089 / LMG 22485 / NCIMB 9086 / R18194 / 383), this protein is Chaperone protein HscA homolog.